The primary structure comprises 199 residues: Recombination protein RecR (199 aa).

The C4-type zinc-finger motif lies at 58-73; it reads CKTCGNIDTQSPCTVC. Residues 81–176 form the Toprim domain; that stretch reads AMIVVVADVA…KVTRLAHGVP (96 aa).

This sequence belongs to the RecR family.

May play a role in DNA repair. It seems to be involved in an RecBC-independent recombinational process of DNA repair. It may act with RecF and RecO. The chain is Recombination protein RecR from Bradyrhizobium sp. (strain ORS 278).